The chain runs to 138 residues: Superoxide dismutase [Mn] (138 aa).

Mn(2+) is bound by residues H1, H49, D133, and H137.

It belongs to the iron/manganese superoxide dismutase family. Requires Mn(2+) as cofactor.

The enzyme catalyses 2 superoxide + 2 H(+) = H2O2 + O2. Its function is as follows. Destroys superoxide anion radicals which are normally produced within the cells and which are toxic to biological systems. In Mycobacterium celatum, this protein is Superoxide dismutase [Mn] (sodA).